Consider the following 1033-residue polypeptide: Isoleucine--tRNA ligase 2 (1033 aa).

The 'HIGH' region signature appears at 47–57 (PTANGLPHVGH). Positions 590 to 594 (KMSKS) match the 'KMSKS' region motif. Lysine 593 provides a ligand contact to ATP.

Belongs to the class-I aminoacyl-tRNA synthetase family. IleS type 2 subfamily. In terms of assembly, monomer. Zn(2+) is required as a cofactor.

It localises to the cytoplasm. The enzyme catalyses tRNA(Ile) + L-isoleucine + ATP = L-isoleucyl-tRNA(Ile) + AMP + diphosphate. In terms of biological role, catalyzes the attachment of isoleucine to tRNA(Ile). As IleRS can inadvertently accommodate and process structurally similar amino acids such as valine, to avoid such errors it has two additional distinct tRNA(Ile)-dependent editing activities. One activity is designated as 'pretransfer' editing and involves the hydrolysis of activated Val-AMP. The other activity is designated 'posttransfer' editing and involves deacylation of mischarged Val-tRNA(Ile). The chain is Isoleucine--tRNA ligase 2 from Bacillus cereus (strain ZK / E33L).